The following is a 489-amino-acid chain: Glucose-6-phosphate 1-dehydrogenase (489 aa).

NADP(+) is bound by residues R50 and K151. 4 residues coordinate substrate: H181, K185, E219, and D238. H243 acts as the Proton acceptor in catalysis. Substrate-binding residues include K341 and K346.

The protein belongs to the glucose-6-phosphate dehydrogenase family. In terms of assembly, homodimer.

It carries out the reaction D-glucose 6-phosphate + NADP(+) = 6-phospho-D-glucono-1,5-lactone + NADPH + H(+). It participates in carbohydrate degradation; pentose phosphate pathway; D-ribulose 5-phosphate from D-glucose 6-phosphate (oxidative stage): step 1/3. Catalyzes the oxidation of glucose 6-phosphate to 6-phosphogluconolactone. This is Glucose-6-phosphate 1-dehydrogenase from Gluconobacter oxydans (strain 621H) (Gluconobacter suboxydans).